A 158-amino-acid polypeptide reads, in one-letter code: Small ribosomal subunit protein uS7 (158 aa).

It belongs to the universal ribosomal protein uS7 family. In terms of assembly, part of the 30S ribosomal subunit. Contacts proteins S9 and S11.

Its function is as follows. One of the primary rRNA binding proteins, it binds directly to 16S rRNA where it nucleates assembly of the head domain of the 30S subunit. Is located at the subunit interface close to the decoding center, probably blocks exit of the E-site tRNA. The chain is Small ribosomal subunit protein uS7 from Granulibacter bethesdensis (strain ATCC BAA-1260 / CGDNIH1).